The following is a 203-amino-acid chain: Glycerol-3-phosphate acyltransferase (203 aa).

Transmembrane regions (helical) follow at residues 3–23 (ILLA…VVVS), 51–71 (KAAI…VWLV), 74–94 (FGIG…LGHL), 116–136 (AVHP…AFFF), 140–160 (SLAA…LFGT), and 164–178 (PVAW…LLIW).

It belongs to the PlsY family. Probably interacts with PlsX.

It localises to the cell inner membrane. The enzyme catalyses an acyl phosphate + sn-glycerol 3-phosphate = a 1-acyl-sn-glycero-3-phosphate + phosphate. The protein operates within lipid metabolism; phospholipid metabolism. Catalyzes the transfer of an acyl group from acyl-phosphate (acyl-PO(4)) to glycerol-3-phosphate (G3P) to form lysophosphatidic acid (LPA). This enzyme utilizes acyl-phosphate as fatty acyl donor, but not acyl-CoA or acyl-ACP. The protein is Glycerol-3-phosphate acyltransferase of Burkholderia pseudomallei (strain 1710b).